The chain runs to 319 residues: Protein HEXIM1 (319 aa).

Residues 1-22 (MELIKEETAPEDDSRGRQRDCR) show a composition bias toward basic and acidic residues. 4 disordered regions span residues 1 to 111 (MELI…KKRR), 157 to 223 (LMEE…LQKD), 262 to 286 (NNWL…RVRE), and 299 to 319 (NELL…SQPS). Residues 24 to 35 (SVVSSKQVQRNQ) show a composition bias toward polar residues. A compositionally biased stretch (basic and acidic residues) spans 49-61 (PMCRDRSDPEPRT). Positions 97–111 (GKKKHRRRPSKKKRR) are enriched in basic residues. Residues 185–202 (TASEDENFEAEEDDEEEG) are compositionally biased toward acidic residues. Gly residues predominate over residues 203-216 (GGGSDGMGRPGQAG). A coiled-coil region spans residues 240–306 (SKQELVREYL…ENNELLLKTP (67 aa)). The span at 306–319 (PASNEPGLNQSQPS) shows a compositional bias: polar residues.

It belongs to the HEXIM family. As to quaternary structure, homooligomer and heterooligomer. Core component of the 7SK RNP complex.

It localises to the nucleus. Its subcellular location is the cytoplasm. In terms of biological role, transcriptional regulator which functions as a general RNA polymerase II transcription inhibitor. Core component of the 7SK RNP complex: in cooperation with 7SK snRNA sequesters P-TEFb in a large inactive 7SK snRNP complex preventing RNA polymerase II phosphorylation and subsequent transcriptional elongation. Plays a role in the regulation of DNA virus-mediated innate immune response by assembling into the HDP-RNP complex, a complex that serves as a platform for IRF3 phosphorylation and subsequent innate immune response activation through the cGAS-STING pathway. In Danio rerio (Zebrafish), this protein is Protein HEXIM1 (hexim1).